Here is a 954-residue protein sequence, read N- to C-terminus: Glycine dehydrogenase (decarboxylating) (954 aa).

At Lys-704 the chain carries N6-(pyridoxal phosphate)lysine.

It belongs to the GcvP family. The glycine cleavage system is composed of four proteins: P, T, L and H. Requires pyridoxal 5'-phosphate as cofactor.

The enzyme catalyses N(6)-[(R)-lipoyl]-L-lysyl-[glycine-cleavage complex H protein] + glycine + H(+) = N(6)-[(R)-S(8)-aminomethyldihydrolipoyl]-L-lysyl-[glycine-cleavage complex H protein] + CO2. Its function is as follows. The glycine cleavage system catalyzes the degradation of glycine. The P protein binds the alpha-amino group of glycine through its pyridoxal phosphate cofactor; CO(2) is released and the remaining methylamine moiety is then transferred to the lipoamide cofactor of the H protein. This Rhizobium leguminosarum bv. trifolii (strain WSM2304) protein is Glycine dehydrogenase (decarboxylating).